The following is a 2092-amino-acid chain: MDSILSKQLVDKTGFVRVPIKHFDCTMLTLALPTFDVSKMVDRITIDFNLDDIQGASEIGSTLLPSMSIDVEDMANFVHDFTFGHLADKTDRLLMREFPMMNDGFDHLSPDMIIKTTSGMYNIVEFTTFRGDERGAFQAAMTKLAKYEVPCENRSQGRTVVLYVVSAYRHGVWSNLELEDSEAEEMVYRYRLALSVMDELRTLFPELSSTDEELGKTERELLAMVSSIQINWSVTESVFPPFSREMFDRFRSSPPDSEYITRIVSRCLINSQEKLINSSFFAEGNDKALRFSKNAEECSLAVERALNQYRAEDNLRDLNDHKSTIQLPPWLSYHDVDGKDLCPLQGLDVRGDHPMCNLWREVVTSANLEEIERMHDDAAAELEFALSGVKDRPDERNRYHRVHLNMGSDDSVYIAALGVNGKKHKADTLVQQMRDRSKQPFSPDHDVDHISEFLSACSSDLWATDEDLYNPLSCDKELRLAAQRIHQPSLSERGFNEIITEHYKFMGSRIGSWCQMVSLIGAELSASVKQHVKPNYFVIKRLLGSGIFLLIKPTSSKSHIFVSFAIKRSCWAFDLSTSRVFKPYIDAGDLLVTDFVSYKLSKLTNLCKCVSLMESSFSFWAEAFGIPSWNFVGDLFRSSDSAAMDASYMGKLSLLTLLEDKAATEELQTIARYIIMEGFVSPPEIPKPHKMTSKFPKVLRSELQVYLLNCLCRTIQRIAGEPFILKKKDGSISWGGMFNPFSGRPLLDMQPLISCCYNGYFKNKEEETEPSSLSGMYKKIIELEHLRPQSDAFLGYKDPELPRMHEFSVSYLKEACNHAKLVLRSLYGQNFMEQIDNQIIRELSGLTLERLATLKATSNFNENWYVYKDVADKNYTRDKLLVKMSKYASEGKSLAIQKFEDCMRQIESQGCMHICLFKKQQHGGLREIYVMGAEERIVQSVVETIARSIGKFFASDTLCNPPNKVKIPETHGIRARKQCKGPVWTCATSDDARKWNQGHFVTKFALMLCEFTSPKWWPLIIRGCSMFTRKRMMMNLNYLKILDGHRELDIRDDFVMDLFKAYHGEAEVPWAFKGKTYLETTTGMMQGILHYTSSLLHTIHQEYIRSLSFKIFNLKVAPEMSKGLVCDMMQGSDDSSMLISFPADDEKVLTRCKVAAAICFRMKKELGVYLAIYPSEKSTANTDFVMEYNSEFYFHTQHVRPTIRWIAACCSLPEVETLVARQEEASNLMTSVTEGGGSFSLAAMIQQAQCTLHYMLMGMGVSELFLEYKKAVLKWNDPGLGFFLLDNPYACGLGGFRFNLFKAITRTDLQKLYAFFMKKVKGSAARDWADEDVTIPETCSVSPGGALILSSSLKWGSRKKFQKLRDRLNIPENWIELINENPEVLYRAPRTGPEILLRIAEKVHSPGVVSSLSSGNAVCKVMASAVYFLSATIFEDTGRPEFNFLEDSKYSLLQKMAAYSGFHGFNDMEPEDILFLFPNIEELESLDSIVYNKGEIDIIPRVNIRDATQTRVTIFNEQKTLRTSPEKLVSDKWFGTQKSRIGKTTFLAEWEKLKKIVKWLEDTPEATLAHTPLNNHIQVRNFFARMESKPRTVRITGAPVKKRSGVSKIAMVIRDNFSRMGHLRGVEDLAGFTRSVSAEILKHFLFCILQGPYSESYKLQLIYRVLSSVSNVEIKESDGKTKTNLIGILQRFLDGDHVVPIIEEMGAGTVGGFIKRQQSKVVQNKVVYYGVGIWRGFMDGYQVHLEIENDIGQPPRLRNVTTNCQSSPWDLSIPIRQWAEDMGVTNNQDYSSKSSRGARYWMHSFRMQGPSKPFGCPVYIIKGDMSDVIRLRKEEVEMKVRGSTLNLYTKHHSHQDLHILSYTASDNDLSPGIFKSISDEGVAQALQLFEREPSNCWVRCESVAPKFISAILEICEGKRQIRGINRTRLSEIVRICSESSLRSKVGSMFSFVANVEEAHDVDYDALMDLMIEDAKNNAFSHVVDCIELDVSGPYEMESFDTSDVNLFGPAHYKDISSLSMIAHPLMDKFVDYAISKMGRASVRKVLETGRCSSKDYDLSKVLFRTLQRPEESIRIDDLELYEETDVADDMLG.

An endonuclease region spans residues 18-215; that stretch reads VPIKHFDCTM…ELSSTDEELG (198 aa). His79, Asp111, and Glu125 together coordinate Mn(2+). Lys143 acts as the For endonuclease activity in catalysis. The region spanning 975 to 1166 is the RdRp catalytic domain; sequence ARKQCKGPVW…AICFRMKKEL (192 aa). Asp1134 serves as a coordination point for Mg(2+). Positions 1706–1822 are cap-binding; the sequence is GAGTVGGFIK…PFGCPVYIIK (117 aa).

The protein belongs to the Bunyavirales RNA polymerase family. In terms of assembly, homomultimer. Interacts with glycoprotein N; this interaction allows efficient polymerase packaging into virus particles. Interacts with nucleoprotein N. Mn(2+) serves as cofactor. Mg(2+) is required as a cofactor.

It localises to the host Golgi apparatus. Its subcellular location is the host endoplasmic reticulum. The protein resides in the host endoplasmic reticulum-Golgi intermediate compartment. The protein localises to the virion. It carries out the reaction RNA(n) + a ribonucleoside 5'-triphosphate = RNA(n+1) + diphosphate. Its function is as follows. RNA-dependent RNA polymerase, which is responsible for the replication and transcription of the viral RNA genome using antigenomic RNA as an intermediate. During transcription, synthesizes subgenomic RNAs and assures their capping by a cap-snatching mechanism, which involves the endonuclease activity cleaving the host capped pre-mRNAs. These short capped RNAs are then used as primers for viral transcription. The 3'-end of subgenomic mRNAs molecules are not polyadenylated. During replication, the polymerase binds the 5' and 3' vRNA extremities at distinct sites. In turn, significant conformational changes occur in the polymerase and in vRNA to initiate active RNA synthesis. As a consequence of the use of the same enzyme for both transcription and replication, these mechanisms need to be well coordinated. This Aedes (Bovine) protein is RNA-directed RNA polymerase L.